We begin with the raw amino-acid sequence, 374 residues long: Glycerophosphodiester phosphodiesterase GDPD2 (374 aa).

In terms of domain architecture, GP-PDE spans 38–326 (FSVIGHRGIG…DFVEEIIEST (289 aa)). Positions 330-349 (MIRPPPSSSPLPSPSKDDDV) are disordered. The span at 332–342 (RPPPSSSPLPS) shows a compositional bias: pro residues.

This sequence belongs to the glycerophosphoryl diester phosphodiesterase family. Expressed in roots, shoots, flowers and siliques.

The catalysed reaction is a sn-glycero-3-phosphodiester + H2O = an alcohol + sn-glycerol 3-phosphate + H(+). The chain is Glycerophosphodiester phosphodiesterase GDPD2 from Arabidopsis thaliana (Mouse-ear cress).